Reading from the N-terminus, the 233-residue chain is Synaptogyrin-1 (233 aa).

Met1 is subject to N-acetylmethionine. The Cytoplasmic segment spans residues 1–23 (MEGGAYGAGKAGGAFDPYTLVRQ). Positions 20-173 (LVRQPHTILR…QAVLAFQRYQ (154 aa)) constitute an MARVEL domain. A helical membrane pass occupies residues 24–44 (PHTILRVVSWLFSIVVFGSIV). Residues 45–71 (NEGYLNSASEGEEFCIYNRNPNACSYG) lie on the Lumenal side of the membrane. Residues 72 to 92 (VAVGVLAFLTCLLYLALDVYF) traverse the membrane as a helical segment. Residues 93–103 (PQISSVKDRKK) lie on the Cytoplasmic side of the membrane. The chain crosses the membrane as a helical span at residues 104-124 (AVLSDIGVSAFWAFLWFVGFC). Residues 125–148 (YLANQWQVSKPKDNPLNEGTDAAR) lie on the Lumenal side of the membrane. The chain crosses the membrane as a helical span at residues 149-169 (AAIAFSFFSIFTWAGQAVLAF). The Cytoplasmic portion of the chain corresponds to 170-233 (QRYQIGADSA…EPQGYQSQGY (64 aa)). Residues 194–233 (MPYAPYVEPTGPDPAGMGGTYQQPANTFDTEPQGYQSQGY) form a disordered region. The segment covering 213–233 (TYQQPANTFDTEPQGYQSQGY) has biased composition (polar residues).

It belongs to the synaptogyrin family.

The protein resides in the cytoplasmic vesicle. Its subcellular location is the secretory vesicle. The protein localises to the synaptic vesicle membrane. It is found in the melanosome. Functionally, may play a role in regulated exocytosis. Modulates the localization of synaptophysin/SYP into synaptic-like microvesicles and may therefore play a role in synaptic-like microvesicle formation and/or maturation. Involved in the regulation of short-term and long-term synaptic plasticity. The chain is Synaptogyrin-1 from Homo sapiens (Human).